Consider the following 548-residue polypeptide: Chaperonin GroEL (548 aa).

ATP contacts are provided by residues 30–33 (TLGP), K51, 87–91 (DGTTT), G415, 479–481 (NAA), and D495.

Belongs to the chaperonin (HSP60) family. In terms of assembly, forms a cylinder of 14 subunits composed of two heptameric rings stacked back-to-back. Interacts with the co-chaperonin GroES.

The protein localises to the cytoplasm. The enzyme catalyses ATP + H2O + a folded polypeptide = ADP + phosphate + an unfolded polypeptide.. Its function is as follows. Together with its co-chaperonin GroES, plays an essential role in assisting protein folding. The GroEL-GroES system forms a nano-cage that allows encapsulation of the non-native substrate proteins and provides a physical environment optimized to promote and accelerate protein folding. This chain is Chaperonin GroEL, found in Ectopseudomonas mendocina (strain ymp) (Pseudomonas mendocina).